The sequence spans 342 residues: Isopentenyl-diphosphate delta-isomerase (342 aa).

Substrate is bound at residue 6–7; that stretch reads RK. FMN-binding positions include S63, 64 to 66, S94, and N122; that span reads SMT. Position 94–96 (94–96) interacts with substrate; the sequence is SMR. Q157 serves as a coordination point for substrate. E158 is a Mg(2+) binding site. FMN-binding positions include K189, T219, 269-271, and 290-291; these read GLK and AG.

Belongs to the IPP isomerase type 2 family. As to quaternary structure, homooctamer. Dimer of tetramers. It depends on FMN as a cofactor. The cofactor is NADPH. Requires Mg(2+) as cofactor.

Its subcellular location is the cytoplasm. The enzyme catalyses isopentenyl diphosphate = dimethylallyl diphosphate. Functionally, involved in the biosynthesis of isoprenoids. Catalyzes the 1,3-allylic rearrangement of the homoallylic substrate isopentenyl (IPP) to its allylic isomer, dimethylallyl diphosphate (DMAPP). This Rickettsia bellii (strain RML369-C) protein is Isopentenyl-diphosphate delta-isomerase.